The sequence spans 24 residues: Neurotoxin 5 (24 aa).

Positions 2–24 constitute an LCN-type CS-alpha/beta domain; it reads RDAYIAQNYNCVYTCFKNDYCND.

It belongs to the long (4 C-C) scorpion toxin superfamily. Sodium channel inhibitor family. Alpha subfamily. As to expression, expressed by the venom gland.

It localises to the secreted. Functionally, binds to sodium channels (Nav) and inhibits the inactivation of the activated channels, thereby blocking neuronal transmission. The chain is Neurotoxin 5 from Buthus occitanus tunetanus (Common European scorpion).